Here is a 222-residue protein sequence, read N- to C-terminus: Putative N-acetylmannosamine-6-phosphate 2-epimerase (222 aa).

Belongs to the NanE family.

The catalysed reaction is an N-acyl-D-glucosamine 6-phosphate = an N-acyl-D-mannosamine 6-phosphate. It participates in amino-sugar metabolism; N-acetylneuraminate degradation; D-fructose 6-phosphate from N-acetylneuraminate: step 3/5. Its function is as follows. Converts N-acetylmannosamine-6-phosphate (ManNAc-6-P) to N-acetylglucosamine-6-phosphate (GlcNAc-6-P). In Staphylococcus aureus (strain MSSA476), this protein is Putative N-acetylmannosamine-6-phosphate 2-epimerase.